The chain runs to 594 residues: Probable acyl-CoA dehydrogenase (594 aa).

The Proton acceptor role is filled by Glu-405.

The protein belongs to the acyl-CoA dehydrogenase family. FAD serves as cofactor.

The enzyme catalyses a 2,3-saturated acyl-CoA + A = a 2,3-dehydroacyl-CoA + AH2. It functions in the pathway lipid metabolism; fatty acid beta-oxidation. Involved in the degradation of long-chain fatty acids. The sequence is that of Probable acyl-CoA dehydrogenase (fadE) from Bacillus subtilis (strain 168).